We begin with the raw amino-acid sequence, 161 residues long: Allophycocyanin alpha chain (161 aa).

An N4-methylasparagine modification is found at N71. C81 lines the (2R,3E)-phycocyanobilin pocket.

The protein belongs to the phycobiliprotein family. Heterodimer of an alpha and a beta chain. Contains one covalently linked phycocyanobilin chromophore.

The protein localises to the plastid. It localises to the chloroplast thylakoid membrane. In terms of biological role, light-harvesting photosynthetic bile pigment-protein from the phycobiliprotein complex. Allophycocyanin has a maximum absorption at approximately 650 nanometers. In Cyanidium caldarium (Red alga), this protein is Allophycocyanin alpha chain (apcA).